Here is a 131-residue protein sequence, read N- to C-terminus: ER membrane protein complex subunit 5 (131 aa).

Over 1 to 3 (MAP) the chain is Cytoplasmic. Residues 4–22 (SLWKGLVGIGLFALAHAAL) traverse the membrane as a helical segment. At 23–43 (SAAQHRSYMRLTEKEDESLPI) the chain is on the lumenal side. A helical membrane pass occupies residues 44–63 (DIVLQTLLAFAVTCYGIVHI). At 64-131 (AGEFKDMDAT…KLRKLESLRR (68 aa)) the chain is on the cytoplasmic side. Serine 120 bears the Phosphoserine mark.

Belongs to the membrane magnesium transporter (TC 1.A.67) family. Component of the ER membrane protein complex (EMC).

Its subcellular location is the endoplasmic reticulum membrane. It is found in the golgi apparatus membrane. The protein localises to the early endosome membrane. Its function is as follows. Part of the endoplasmic reticulum membrane protein complex (EMC) that enables the energy-independent insertion into endoplasmic reticulum membranes of newly synthesized membrane proteins. Preferentially accommodates proteins with transmembrane domains that are weakly hydrophobic or contain destabilizing features such as charged and aromatic residues. Involved in the cotranslational insertion of multi-pass membrane proteins in which stop-transfer membrane-anchor sequences become ER membrane spanning helices. It is also required for the post-translational insertion of tail-anchored/TA proteins in endoplasmic reticulum membranes. By mediating the proper cotranslational insertion of N-terminal transmembrane domains in an N-exo topology, with translocated N-terminus in the lumen of the ER, controls the topology of multi-pass membrane proteins like the G protein-coupled receptors. By regulating the insertion of various proteins in membranes, it is indirectly involved in many cellular processes. May be involved in Mg(2+) transport. This is ER membrane protein complex subunit 5 from Pongo abelii (Sumatran orangutan).